The primary structure comprises 146 residues: 3-hydroxyacyl-[acyl-carrier-protein] dehydratase FabZ (146 aa).

His47 is a catalytic residue.

Belongs to the thioester dehydratase family. FabZ subfamily.

It localises to the cytoplasm. It catalyses the reaction a (3R)-hydroxyacyl-[ACP] = a (2E)-enoyl-[ACP] + H2O. In terms of biological role, involved in unsaturated fatty acids biosynthesis. Catalyzes the dehydration of short chain beta-hydroxyacyl-ACPs and long chain saturated and unsaturated beta-hydroxyacyl-ACPs. The protein is 3-hydroxyacyl-[acyl-carrier-protein] dehydratase FabZ of Methylococcus capsulatus (strain ATCC 33009 / NCIMB 11132 / Bath).